A 610-amino-acid chain; its full sequence is Aspartate--tRNA(Asp/Asn) ligase (610 aa).

Residue E196 participates in L-aspartate binding. The segment at 220–223 is aspartate; sequence QIFK. R242 contributes to the L-aspartate binding site. Residues 242-244 and Q251 contribute to the ATP site; that span reads RDE. L-aspartate is bound at residue H465. Residue E499 coordinates ATP. R506 contacts L-aspartate. 551-554 is an ATP binding site; that stretch reads GMDR.

The protein belongs to the class-II aminoacyl-tRNA synthetase family. Type 1 subfamily. As to quaternary structure, homodimer.

The protein localises to the cytoplasm. It carries out the reaction tRNA(Asx) + L-aspartate + ATP = L-aspartyl-tRNA(Asx) + AMP + diphosphate. Functionally, aspartyl-tRNA synthetase with relaxed tRNA specificity since it is able to aspartylate not only its cognate tRNA(Asp) but also tRNA(Asn). Reaction proceeds in two steps: L-aspartate is first activated by ATP to form Asp-AMP and then transferred to the acceptor end of tRNA(Asp/Asn). This Nitratidesulfovibrio vulgaris (strain ATCC 29579 / DSM 644 / CCUG 34227 / NCIMB 8303 / VKM B-1760 / Hildenborough) (Desulfovibrio vulgaris) protein is Aspartate--tRNA(Asp/Asn) ligase.